The chain runs to 282 residues: PTS system sorbose-specific EIID component (282 aa).

The PTS EIID domain occupies 13–281; sequence TKITKGDMFK…GIVGYWLGIL (269 aa). A run of 4 helical transmembrane segments spans residues 135-155, 197-217, 234-254, and 261-281; these read LGAS…FVAF, GLFI…PLVV, ILDQ…CMYL, and PILL…LGIL.

It localises to the cell membrane. In terms of biological role, the phosphoenolpyruvate-dependent sugar phosphotransferase system (PTS), a major carbohydrate active transport system, catalyzes the phosphorylation of incoming sugar substrates concomitant with their translocation across the cell membrane. The enzyme II SorABCD PTS system is involved in L-sorbose transport. The chain is PTS system sorbose-specific EIID component from Lacticaseibacillus casei (Lactobacillus casei).